The sequence spans 67 residues: DNA-directed RNA polymerase subunit omega (67 aa).

Belongs to the RNA polymerase subunit omega family. In terms of assembly, the RNAP catalytic core consists of 2 alpha, 1 beta, 1 beta' and 1 omega subunit. When a sigma factor is associated with the core the holoenzyme is formed, which can initiate transcription.

The enzyme catalyses RNA(n) + a ribonucleoside 5'-triphosphate = RNA(n+1) + diphosphate. Its function is as follows. Promotes RNA polymerase assembly. Latches the N- and C-terminal regions of the beta' subunit thereby facilitating its interaction with the beta and alpha subunits. The sequence is that of DNA-directed RNA polymerase subunit omega from Listeria welshimeri serovar 6b (strain ATCC 35897 / DSM 20650 / CCUG 15529 / CIP 8149 / NCTC 11857 / SLCC 5334 / V8).